A 256-amino-acid chain; its full sequence is Enoyl-[acyl-carrier-protein] reductase [NADPH] FabI (256 aa).

Residues Gly13, 19–20 (SI), 40–44 (RKERS), 66–67 (DV), and Ile94 contribute to the NADP(+) site. Ala97 is a binding site for substrate. Catalysis depends on proton acceptor residues Tyr147 and Tyr157. Residues Lys164 and 193–197 (IRTLS) each bind NADP(+).

The protein belongs to the short-chain dehydrogenases/reductases (SDR) family. FabI subfamily. In terms of assembly, homotetramer.

The enzyme catalyses a 2,3-saturated acyl-[ACP] + NADP(+) = a (2E)-enoyl-[ACP] + NADPH + H(+). Its pathway is lipid metabolism; fatty acid biosynthesis. Catalyzes the reduction of a carbon-carbon double bond in an enoyl moiety that is covalently linked to an acyl carrier protein (ACP). Involved in the elongation cycle of fatty acid which are used in the lipid metabolism. This chain is Enoyl-[acyl-carrier-protein] reductase [NADPH] FabI (fabI), found in Staphylococcus aureus (strain MRSA252).